The primary structure comprises 466 residues: Argininosuccinate lyase (466 aa).

It belongs to the lyase 1 family. Argininosuccinate lyase subfamily.

The protein resides in the cytoplasm. The enzyme catalyses 2-(N(omega)-L-arginino)succinate = fumarate + L-arginine. It participates in amino-acid biosynthesis; L-arginine biosynthesis; L-arginine from L-ornithine and carbamoyl phosphate: step 3/3. The sequence is that of Argininosuccinate lyase from Synechococcus elongatus (strain ATCC 33912 / PCC 7942 / FACHB-805) (Anacystis nidulans R2).